The primary structure comprises 824 residues: Tuftelin-interacting protein 11 (824 aa).

Residues 1 to 135 are disordered; the sequence is MSMSHLYGKD…RTFAGGIKSN (135 aa). Positions 11–25 are enriched in acidic residues; it reads EDSDGVEMENFEITD. Basic and acidic residues-rich tracts occupy residues 41-61 and 85-114; these read QTKE…DERP and PAAE…EAKK. Positions 122-135 are enriched in polar residues; sequence KPSQRTFAGGIKSN. The region spanning 145 to 191 is the G-patch domain; the sequence is TKGIGQKLLQKMGYMPGRGLGKNAQGIIAPIEAKQRRGKGAVGAYGS.

It belongs to the TFP11/STIP family. Identified in the spliceosome C complex.

It is found in the nucleus. In terms of biological role, involved in pre-mRNA splicing, specifically in spliceosome disassembly during late-stage splicing events. This is Tuftelin-interacting protein 11 (tfip11) from Xenopus laevis (African clawed frog).